Consider the following 51-residue polypeptide: Insulin-2 (51 aa).

3 disulfides stabilise this stretch: Cys8–Cys37, Cys20–Cys50, and Cys36–Cys41.

Belongs to the insulin family. In terms of assembly, heterodimer of a B chain and an A chain linked by two disulfide bonds.

It localises to the secreted. Functionally, insulin decreases blood glucose concentration. It increases cell permeability to monosaccharides, amino acids and fatty acids. It accelerates glycolysis, the pentose phosphate cycle, and glycogen synthesis in liver. The sequence is that of Insulin-2 from Katsuwonus pelamis (Skipjack tuna).